Consider the following 665-residue polypeptide: DNA ligase (665 aa).

Residues 35 to 39, 88 to 89, and Glu117 contribute to the NAD(+) site; these read DAIYD and SL. Lys119 acts as the N6-AMP-lysine intermediate in catalysis. Positions 140, 174, 290, and 314 each coordinate NAD(+). Zn(2+) is bound by residues Cys406, Cys409, Cys424, and Cys429. One can recognise a BRCT domain in the interval 588–665; the sequence is KKTERFAQLS…EEAFNELLVS (78 aa).

The protein belongs to the NAD-dependent DNA ligase family. LigA subfamily. The cofactor is Mg(2+). Mn(2+) serves as cofactor.

The catalysed reaction is NAD(+) + (deoxyribonucleotide)n-3'-hydroxyl + 5'-phospho-(deoxyribonucleotide)m = (deoxyribonucleotide)n+m + AMP + beta-nicotinamide D-nucleotide.. Its function is as follows. DNA ligase that catalyzes the formation of phosphodiester linkages between 5'-phosphoryl and 3'-hydroxyl groups in double-stranded DNA using NAD as a coenzyme and as the energy source for the reaction. It is essential for DNA replication and repair of damaged DNA. The protein is DNA ligase of Metamycoplasma arthritidis (strain 158L3-1) (Mycoplasma arthritidis).